A 442-amino-acid chain; its full sequence is Trigger factor (442 aa).

In terms of domain architecture, PPIase FKBP-type spans 162–247 (GDQVTIDAIG…IKAVHTSEPT (86 aa)).

The protein belongs to the FKBP-type PPIase family. Tig subfamily.

It is found in the cytoplasm. It carries out the reaction [protein]-peptidylproline (omega=180) = [protein]-peptidylproline (omega=0). In terms of biological role, involved in protein export. Acts as a chaperone by maintaining the newly synthesized protein in an open conformation. Functions as a peptidyl-prolyl cis-trans isomerase. The sequence is that of Trigger factor from Rickettsia canadensis (strain McKiel).